The following is a 433-amino-acid chain: Enolase (433 aa).

Q164 serves as a coordination point for (2R)-2-phosphoglycerate. Residue E206 is the Proton donor of the active site. Residues D243, E289, and D316 each coordinate Mg(2+). (2R)-2-phosphoglycerate contacts are provided by K341, R370, S371, and K392. Residue K341 is the Proton acceptor of the active site.

Belongs to the enolase family. Mg(2+) is required as a cofactor.

It is found in the cytoplasm. The protein resides in the secreted. It localises to the cell surface. It carries out the reaction (2R)-2-phosphoglycerate = phosphoenolpyruvate + H2O. The protein operates within carbohydrate degradation; glycolysis; pyruvate from D-glyceraldehyde 3-phosphate: step 4/5. Functionally, catalyzes the reversible conversion of 2-phosphoglycerate (2-PG) into phosphoenolpyruvate (PEP). It is essential for the degradation of carbohydrates via glycolysis. This Borrelia hermsii (strain HS1 / DAH) protein is Enolase.